Reading from the N-terminus, the 862-residue chain is Aldehyde-alcohol dehydrogenase (862 aa).

Cys-244 is a catalytic residue. 420–425 (GFWGGN) is an NAD(+) binding site.

It in the N-terminal section; belongs to the aldehyde dehydrogenase family. This sequence in the C-terminal section; belongs to the iron-containing alcohol dehydrogenase family.

It catalyses the reaction a primary alcohol + NAD(+) = an aldehyde + NADH + H(+). It carries out the reaction a secondary alcohol + NAD(+) = a ketone + NADH + H(+). The catalysed reaction is an aldehyde + NAD(+) + H2O = a carboxylate + NADH + 2 H(+). Its function is as follows. Has both aldehyde and alcohol dehydrogenase activities. Can use acetaldehyde, butyraldehyde, butanol and ethanol. This is Aldehyde-alcohol dehydrogenase from Clostridium acetobutylicum (strain ATCC 824 / DSM 792 / JCM 1419 / IAM 19013 / LMG 5710 / NBRC 13948 / NRRL B-527 / VKM B-1787 / 2291 / W).